A 221-amino-acid polypeptide reads, in one-letter code: Iron-sulfur cluster repair protein YtfE (221 aa).

This sequence belongs to the RIC family. YtfE subfamily. Homodimer.

Its subcellular location is the cytoplasm. Functionally, di-iron-containing protein involved in the repair of iron-sulfur clusters damaged by oxidative and nitrosative stress conditions. In Yersinia pseudotuberculosis serotype IB (strain PB1/+), this protein is Iron-sulfur cluster repair protein YtfE.